The chain runs to 8384 residues: Mucin-19 (8384 aa).

An N-terminal signal peptide occupies residues 1–21; sequence MKLILWYLVVALWCFFKDVEA. Disordered regions lie at residues 33–197, 222–247, 279–305, and 332–467; these read AASR…YGAG, SKADGRETRGSGSAGGETIVFGPDAG, GDTGISSKTVEGNQTSSSGGSVSIDLG, and QEGF…PEAT. Low complexity-rich tracts occupy residues 35-48 and 88-98; these read SRSGGFSYGSSSSG and GGFFNSSSSSG. The segment covering 169–184 has biased composition (basic and acidic residues); it reads DKSRERWDAGNSRSED. Residues 187–197 show a composition bias toward polar residues; that stretch reads ADSTNTRYGAG. Polar residues predominate over residues 279-299; that stretch reads GDTGISSKTVEGNQTSSSGGS. The segment covering 359–369 has biased composition (low complexity); it reads GSDSSSSGDSS. The span at 370–381 shows a compositional bias: polar residues; the sequence is ARNGFENSSGIS. Low complexity-rich tracts occupy residues 424–435 and 443–452; these read SDSGGNTWSSDS and TSSSEYSTSG. VWFD domains are found at residues 478–649, 815–995, and 1274–1447; these read GEIS…QHCN, GRCK…SSCI, and TICH…QECS. 8 disulfide bridges follow: C502/C648, C817/C952, C838/C994, C857/C865, C1276/C1411, C1298/C1446, C1307/C1408, and C1323/C1330. Disordered stretches follow at residues 1680-1699, 1732-2464, 2484-2526, 2540-2827, 2850-2917, 2984-3027, 3075-3368, 3386-3428, 3585-3628, 3667-3736, 4105-4147, 4187-4251, 4315-4390, 4414-4455, 4510-4583, 4790-4843, 4895-4930, 5130-5161, 5429-5452, 5464-5494, 5880-5918, 6069-6403, 6440-6918, 6953-7223, 7250-7749, 7783-7975, and 8020-8133; these read TSSSETTGTTLGPLTEPFTT, AGTT…KSPG, LESE…TEGS, RPLD…MTGT, STVG…LGTI, VTTG…SGTT, GTTG…GKTG, TTRL…GKTG, ETTG…TNGL, GSSA…TGLP, TGSS…NGLS, SAGV…AEVT, GLSA…SARV, TGSS…TNGQ, TGTT…TGLP, SSAGVTGTNGLSAEATETTGPSAGVTGTTGLSAGVT, TGTTGPSAEETGATGPSAEVTGTTGPSGGVTG, VTGTTELSAEVTEKTGPSAEVTGK, GPSAEVTGTTGSSAGVTGTTGPSAGVTGTTG, GTSIPLTGKTGTTRTSVEESTTTGPSAGITGTNGLSAEM, TGKT…STES, GRAT…ETTK, GTSE…TGFK, SFST…SKTG, KNGS…EAGS, and SGRS…VSQP. Composition is skewed to low complexity over residues 1732–1746, 1772–1813, and 1820–1833; these read AGTTGGVDAATTGAA, PGEA…TTGP, and GATSSEATSSEGMS. Residues 1835 to 1860 show a composition bias toward polar residues; that stretch reads VTGQSLGSTAGSDSEITAKTSFTGSS. Low complexity predominate over residues 1868–1879; that stretch reads PSPGSPGHFSGG. Positions 1880-1905 are enriched in polar residues; the sequence is TTEWGNVATTGAAGENTSGALGSTEG. Low complexity predominate over residues 1909 to 1921; that stretch reads ATTSAGSGNTAGT. The segment covering 1950–1968 has biased composition (polar residues); the sequence is GSSTPGEADIGNTSFGKSG. Composition is skewed to low complexity over residues 1969–1983 and 2013–2049; these read TPTVSAASTTSSPVS and GGKITSGWSSSGTSTGASNTPGATGSSTGQTDTSGPS. Over residues 2055 to 2100 the composition is skewed to polar residues; sequence NYGQSSEIPGTIKSSSDVSGTMGQSDTTSGPSVAVTRTSEQSSGVT. 2 stretches are compositionally biased toward low complexity: residues 2132–2147 and 2159–2170; these read TTGSSAEGSGTTGPSS and GSGTSGQSVTGS. 2 stretches are compositionally biased toward polar residues: residues 2171-2186 and 2209-2225; these read RATGLSATELGTTVSF and GSGTTGPSVVRSGTTRL. Low complexity-rich tracts occupy residues 2233 to 2246 and 2280 to 2313; these read TESSPGVTGTTTPS and SGPSVVGSGTTGPTSAGLGTTAPSTRRSSTTKPS. Positions 2238–6086 are approximate repeats of G-V-T-G-T-T-G-P-S-A; the sequence is GVTGTTTPSA…GVTGTTGLSA (3849 aa). Polar residues-rich tracts occupy residues 2316–2332 and 2354–2372; these read RTGTTGQSGAESGTTEP and ATESSTSRPLGETTGTTIP. Residues 2403–2419 show a composition bias toward gly residues; the sequence is SSGGSGATRSSGGGMGT. The segment covering 2420 to 2441 has biased composition (low complexity); sequence TGQSTARSETTGPLFGLTGTFG. Residues 2442–2460 are compositionally biased toward polar residues; sequence QSATVTGTSSNSAGVTTPE. 3 stretches are compositionally biased toward low complexity: residues 2512–2526, 2545–2571, and 2578–2589; these read SAGETGTTEPSTEGS, GSGTTGTLSGGSSTTRSSDGTTGTTRK, and TTGLSGLTGTSG. Polar residues-rich tracts occupy residues 2595 to 2610 and 2638 to 2653; these read TGTSSKSAGVTVTSEK and TRPSGGVTVTSGQSAR. A compositionally biased stretch (low complexity) spans 2654–2681; sequence VTETVGASAGVTGTTGPSTEGSGATGPS. Polar residues-rich tracts occupy residues 2695–2748 and 2755–2770; these read SGTT…TGTT and TETTRPSVVKSGTTGP. Over residues 2787 to 2799 the composition is skewed to low complexity; sequence ATRSSGGETETTG. Composition is skewed to polar residues over residues 2800-2827, 2850-2859, and 2874-2892; these read QSAVKSGTTESFTRLTRTSGQSAGMTGT, STVGLETTRP, and AQTTGPSAGVTVTSGQSAR. The segment covering 2894 to 2910 has biased composition (low complexity); that stretch reads TGASGPSVGVTGTTGPA. Over residues 2984–2998 the composition is skewed to polar residues; that stretch reads VTTGPSVTGVETTAK. The segment covering 2999 to 3027 has biased composition (low complexity); sequence TTSGGLSTTISSVGGTGTTGQSPERSGTT. Positions 3099–3109 are enriched in polar residues; the sequence is PSITGSGTTRP. Positions 3114–3130 are enriched in low complexity; sequence SWTAGTSSGGHSTTSPS. Polar residues predominate over residues 3131 to 3159; sequence VRGTETTGQSAAESVTTGPVTGYTETSGP. Positions 3172–3188 are enriched in low complexity; sequence TVTQTTGSSAAVSGTTV. Positions 3189 to 3224 are enriched in polar residues; that stretch reads QSLTVSGTTRPSSGQTEITGSSVKESGTTESSAVRS. A compositionally biased stretch (low complexity) spans 3225 to 3277; sequence GTTGPTAGVTGTNGPSSAGVTGITGSSPGVTGTTGSSPGVTGTTGSSARSGTS. 2 stretches are compositionally biased toward polar residues: residues 3303 to 3317 and 3324 to 3362; these read ITGTNGLSAEVTGTT and TGTTGPSAGVTRTTGLSAGETGTTGLSPGVTRTTRSSAG. Positions 3390-3417 are enriched in low complexity; that stretch reads SAGVTGTTGPSPGVTGTTGTPAGVTGTT. Composition is skewed to polar residues over residues 3702 to 3728 and 4105 to 4116; these read VTGTTGLSPGVTGTSGLSAEVTGTTGP and TGSSARSGTSIP. The span at 4117 to 4126 shows a compositional bias: low complexity; that stretch reads SVGETGTTRT. Residues 4320–4346 show a composition bias toward polar residues; sequence VTGTTRPSAGVTGTTGQSAEVTGTTEP. 2 stretches are compositionally biased toward low complexity: residues 4347-4385 and 4414-4426; these read SAGLTETTGSSTGVTGATGPLAGVTGTTGISTEVTGTTG and TGSSARSGTSTPS. Composition is skewed to low complexity over residues 5469–5494 and 5889–5903; these read VTGTTGSSAGVTGTTGPSAGVTGTTG and TGTTRTSVEESTTTG. Composition is skewed to polar residues over residues 5908–5918, 6071–6103, and 6111–6121; these read ITGTNGLSAEM, KTRSSAGVTGTTGLSAKSGTSIPSAGKTGTTKT, and TRPSAGITATT. Residues 6156–6168 show a composition bias toward low complexity; sequence TTTGTTGVTTGTT. 2 stretches are compositionally biased toward polar residues: residues 6217–6248 and 6257–6275; these read EVSTISEVSNTGITGVGSETSIETGISNTATT and APGSSSTEATTSIGGSAST. The segment covering 6284–6295 has biased composition (low complexity); the sequence is TGSTRGVRTTGS. Polar residues-rich tracts occupy residues 6303 to 6323 and 6336 to 6346; these read GEFSGTTISSGGFHTEATTLT and ESTTSLPQSAK. A compositionally biased stretch (low complexity) spans 6378–6389; sequence SGTTISSGGSHT. Polar residues-rich tracts occupy residues 6440–6457 and 6470–6503; these read GRATGATTSIAGSDTSQA and TTITSGDSHTEATALTGSRGSIGTESTVETTTYI. Over residues 6507–6523 the composition is skewed to low complexity; it reads GTTRGGLATATTGAFSG. Polar residues predominate over residues 6560 to 6571; it reads TTFTSGGSHTEA. The segment covering 6581–6597 has biased composition (low complexity); that stretch reads TGTESRAATTRAAPGTT. A compositionally biased stretch (polar residues) spans 6599–6608; the sequence is VPGSSNTGAT. Residues 6612 to 6628 show a composition bias toward low complexity; it reads GGSATTRGRITTATTGA. 2 stretches are compositionally biased toward polar residues: residues 6669-6680 and 6689-6698; these read RITSGGSYTATT and APGSSNTGAT. Positions 6707–6718 are enriched in low complexity; that stretch reads TRGRITTATTGA. Positions 6752–6766 are enriched in polar residues; sequence TTLTGDRSSTGSESR. The segment covering 6767–6781 has biased composition (low complexity); that stretch reads TATTGVAPGTTVAPG. Positions 6794 to 6817 are enriched in polar residues; sequence SGTTNIGRATGATTSIVGSDTSQA. The span at 6827-6842 shows a compositional bias: low complexity; it reads SPGASSTSQSSRPGTS. Over residues 6843–6875 the composition is skewed to polar residues; the sequence is VTPDSSASESETVTTKEFSGTTAISRTSHTGTP. A compositionally biased stretch (low complexity) spans 6887 to 6901; the sequence is TATTGVAPGTTVAPG. 2 stretches are compositionally biased toward polar residues: residues 6902–6911 and 6953–6964; these read SSNTEATTSV and GTSEVAPSTTVA. Residues 6966-6994 show a composition bias toward low complexity; that stretch reads GSFSTAATTSPGASGTTGVTTTTKTTTSL. Positions 7006–7041 are enriched in polar residues; the sequence is SATTGAPGSRTGTAGVPSATTVSPGSSNSEATTSVG. The span at 7045–7074 shows a compositional bias: low complexity; the sequence is KTGAETITEATTSTEGTGTSGTGFKTGTSE. A compositionally biased stretch (polar residues) spans 7085–7094; it reads SFSTAATTSP. The span at 7095-7112 shows a compositional bias: low complexity; it reads GASGMTGVTTTTKTTTSL. Residues 7143–7158 show a composition bias toward polar residues; sequence TRVTPGSSNSEATTSV. Composition is skewed to low complexity over residues 7201 to 7215 and 7250 to 7276; these read SGSSNTEATTSTEGT and SFSTATTSSGASGITRAGPTSETTTSL. Polar residues predominate over residues 7293–7311; sequence SGTTVAPGSSNSEATTSVG. Residues 7379 to 7397 are compositionally biased toward low complexity; the sequence is TTSTKGTGTSGTGFKTGTS. Over residues 7403–7421 the composition is skewed to polar residues; the sequence is TTVSPGSFSTATISPGASR. Residues 7422–7435 are compositionally biased toward low complexity; that stretch reads TTGAAPAAETTTSL. The segment covering 7465 to 7483 has biased composition (polar residues); it reads SATTIAPGSSNSEATTSLG. Over residues 7525–7537 the composition is skewed to gly residues; the sequence is PLGGASGTSGGYV. Polar residues-rich tracts occupy residues 7544-7557 and 7571-7596; these read PTTSIEETGTSRTI and AGTSVVAPSTTVAPGSFSTAATTSPG. Over residues 7600 to 7613 the composition is skewed to low complexity; that stretch reads MTGVRTTSKTTTSL. Composition is skewed to polar residues over residues 7642 to 7669 and 7698 to 7708; these read SSRTTILSGSSNTEATNSIEETGTSGTG and SFSTAATTSPG. The span at 7715 to 7732 shows a compositional bias: low complexity; sequence TGPTAETTTFLGGSSTTG. A compositionally biased stretch (polar residues) spans 7783–7811; it reads KNGSMTTALGSQLSSSQTVIPGSSGTISH. Over residues 7812-7828 the composition is skewed to low complexity; it reads TTVAPGSSVTGTTTGAS. Positions 7830-7851 are enriched in polar residues; sequence DQVTGSKTGTTGVALSTTVAPG. Positions 7852–7861 are enriched in low complexity; that stretch reads SSSTEATTST. Residues 7862-7891 show a composition bias toward polar residues; that stretch reads GVHRTTVVGQKTGATTRGSAKQGTRSTIEA. The segment covering 7892-7917 has biased composition (low complexity); sequence TTSFRGTGTTGSGMNTGTTGVVSGNT. Residues 7918-7934 show a composition bias toward polar residues; the sequence is ISPSSFNTEATSGTSER. Low complexity predominate over residues 7938–7952; the sequence is GSEIGTTGIVSGTTV. Polar residues-rich tracts occupy residues 7953-7965, 8020-8040, 8048-8081, and 8110-8120; these read APGSSNTEATTSL, SGRSQPTGSKTGYTVTGSGTT, TGNTPGSTGVTSSQEGTTVVSSGITGIPETSISG, and ETGVQTGSTLV. Residues 8159–8225 enclose the VWFC domain; that stretch reads PVCHGPLGEE…DTCCEIGYCE (67 aa). 4 disulfide bridges follow: C8288–C8339, C8306–C8353, C8315–C8369, and C8319–C8371. The CTCK domain maps to 8288–8376; sequence CKNNCRSSLV…TTCSCLDICQ (89 aa).

As to expression, expressed corneal epithelial cells, conjunctival goblet and epithelial cells and lacrimal gland cells (at protein level). Expressed by mucous cells of the submandibular gland and submucosal gland of the trachea. Expressed by middle ear epithelial cells.

The protein localises to the secreted. In terms of biological role, may function in ocular mucus homeostasis. This Homo sapiens (Human) protein is Mucin-19 (MUC19).